A 576-amino-acid chain; its full sequence is Arginine--tRNA ligase (576 aa).

Residues 126-136 carry the 'HIGH' region motif; the sequence is ANPTGPMHIGH.

The protein belongs to the class-I aminoacyl-tRNA synthetase family. In terms of assembly, monomer.

The protein resides in the cytoplasm. The catalysed reaction is tRNA(Arg) + L-arginine + ATP = L-arginyl-tRNA(Arg) + AMP + diphosphate. This Rickettsia felis (strain ATCC VR-1525 / URRWXCal2) (Rickettsia azadi) protein is Arginine--tRNA ligase.